The primary structure comprises 229 residues: Cytochrome c oxidase subunit 2 (229 aa).

The Mitochondrial intermembrane segment spans residues 1 to 26 (MSTWANLGLQDSASPLMEQLIFFHDH). Residues 27–48 (ALLILVMITVLVGYLMFMLFFN) traverse the membrane as a helical segment. Residues 49 to 62 (SYVNRFLLHGQLIE) are Mitochondrial matrix-facing. Residues 63 to 82 (MIWTILPAIILLFIAMPSLR) traverse the membrane as a helical segment. At 83–229 (LLYLLDEINE…IKWISNSVNS (147 aa)) the chain is on the mitochondrial intermembrane side. Positions 161, 196, 198, 200, 204, and 207 each coordinate Cu cation. E198 is a binding site for Mg(2+).

The protein belongs to the cytochrome c oxidase subunit 2 family. As to quaternary structure, component of the cytochrome c oxidase (complex IV, CIV), a multisubunit enzyme composed of a catalytic core of 3 subunits and several supernumerary subunits. The complex exists as a monomer or a dimer and forms supercomplexes (SCs) in the inner mitochondrial membrane with ubiquinol-cytochrome c oxidoreductase (cytochrome b-c1 complex, complex III, CIII). Cu cation is required as a cofactor.

The protein resides in the mitochondrion inner membrane. It catalyses the reaction 4 Fe(II)-[cytochrome c] + O2 + 8 H(+)(in) = 4 Fe(III)-[cytochrome c] + 2 H2O + 4 H(+)(out). Component of the cytochrome c oxidase, the last enzyme in the mitochondrial electron transport chain which drives oxidative phosphorylation. The respiratory chain contains 3 multisubunit complexes succinate dehydrogenase (complex II, CII), ubiquinol-cytochrome c oxidoreductase (cytochrome b-c1 complex, complex III, CIII) and cytochrome c oxidase (complex IV, CIV), that cooperate to transfer electrons derived from NADH and succinate to molecular oxygen, creating an electrochemical gradient over the inner membrane that drives transmembrane transport and the ATP synthase. Cytochrome c oxidase is the component of the respiratory chain that catalyzes the reduction of oxygen to water. Electrons originating from reduced cytochrome c in the intermembrane space (IMS) are transferred via the dinuclear copper A center (CU(A)) of subunit 2 and heme A of subunit 1 to the active site in subunit 1, a binuclear center (BNC) formed by heme A3 and copper B (CU(B)). The BNC reduces molecular oxygen to 2 water molecules using 4 electrons from cytochrome c in the IMS and 4 protons from the mitochondrial matrix. The sequence is that of Cytochrome c oxidase subunit 2 (mt:CoII) from Drosophila affinis (Fruit fly).